Reading from the N-terminus, the 118-residue chain is Small ribosomal subunit protein uS13 (118 aa).

Residues 93–118 (RNLPVRGQNTKNNARTRKGPTRPLKR) are disordered. Basic residues predominate over residues 106-118 (ARTRKGPTRPLKR).

This sequence belongs to the universal ribosomal protein uS13 family. Part of the 30S ribosomal subunit. Forms a loose heterodimer with protein S19. Forms two bridges to the 50S subunit in the 70S ribosome.

Located at the top of the head of the 30S subunit, it contacts several helices of the 16S rRNA. In the 70S ribosome it contacts the 23S rRNA (bridge B1a) and protein L5 of the 50S subunit (bridge B1b), connecting the 2 subunits; these bridges are implicated in subunit movement. Contacts the tRNAs in the A and P-sites. The protein is Small ribosomal subunit protein uS13 of Psychrobacter cryohalolentis (strain ATCC BAA-1226 / DSM 17306 / VKM B-2378 / K5).